The primary structure comprises 506 residues: Nucleoside import ATP-binding protein NupA (506 aa).

ABC transporter domains are found at residues 7 to 242 and 259 to 503; these read IQMI…VGRS and LEIK…VGGN. An ATP-binding site is contributed by 39–46; sequence GENGAGKS.

It belongs to the ABC transporter superfamily. As to quaternary structure, the complex is composed of two ATP-binding proteins (NupA), two transmembrane proteins (NupB and NupC) and a solute-binding protein (BmpA).

Its subcellular location is the cell membrane. In terms of biological role, part of an ABC transporter complex involved in the uptake of all common nucleosides. Responsible for energy coupling to the transport system. The protein is Nucleoside import ATP-binding protein NupA of Lactococcus lactis subsp. cremoris (strain MG1363).